Here is a 174-residue protein sequence, read N- to C-terminus: ATP synthase subunit b (174 aa).

The chain crosses the membrane as a helical span at residues 9-29; the sequence is LPNTSLIFWEVVTFLILLALL.

It belongs to the ATPase B chain family. As to quaternary structure, F-type ATPases have 2 components, F(1) - the catalytic core - and F(0) - the membrane proton channel. F(1) has five subunits: alpha(3), beta(3), gamma(1), delta(1), epsilon(1). F(0) has three main subunits: a(1), b(2) and c(10-14). The alpha and beta chains form an alternating ring which encloses part of the gamma chain. F(1) is attached to F(0) by a central stalk formed by the gamma and epsilon chains, while a peripheral stalk is formed by the delta and b chains.

The protein resides in the cell membrane. In terms of biological role, f(1)F(0) ATP synthase produces ATP from ADP in the presence of a proton or sodium gradient. F-type ATPases consist of two structural domains, F(1) containing the extramembraneous catalytic core and F(0) containing the membrane proton channel, linked together by a central stalk and a peripheral stalk. During catalysis, ATP synthesis in the catalytic domain of F(1) is coupled via a rotary mechanism of the central stalk subunits to proton translocation. Its function is as follows. Component of the F(0) channel, it forms part of the peripheral stalk, linking F(1) to F(0). The chain is ATP synthase subunit b from Rubrobacter xylanophilus (strain DSM 9941 / JCM 11954 / NBRC 16129 / PRD-1).